Consider the following 118-residue polypeptide: Basic phospholipase A2 nigroxin B (118 aa).

Cystine bridges form between Cys11–Cys70, Cys25–Cys117, Cys27–Cys43, Cys42–Cys98, Cys49–Cys91, Cys59–Cys84, and Cys77–Cys89. Positions 26, 28, and 30 each coordinate Ca(2+). The active site involves His46. Residue Asp47 coordinates Ca(2+). Residue Asp92 is part of the active site.

Belongs to the phospholipase A2 family. Group I subfamily. D49 sub-subfamily. Ca(2+) serves as cofactor. As to expression, expressed by the venom gland.

The protein localises to the secreted. It carries out the reaction a 1,2-diacyl-sn-glycero-3-phosphocholine + H2O = a 1-acyl-sn-glycero-3-phosphocholine + a fatty acid + H(+). Functionally, snake venom phospholipase A2 (PLA2) that has only a weak enzymatic activity. It has a myotoxic activity in vivo (dystrophic effect). PLA2 catalyzes the calcium-dependent hydrolysis of the 2-acyl groups in 3-sn-phosphoglycerides. This is Basic phospholipase A2 nigroxin B from Micrurus nigrocinctus (Central American coral snake).